Reading from the N-terminus, the 177-residue chain is ATP synthase subunit delta (177 aa).

Belongs to the ATPase delta chain family. In terms of assembly, F-type ATPases have 2 components, F(1) - the catalytic core - and F(0) - the membrane proton channel. F(1) has five subunits: alpha(3), beta(3), gamma(1), delta(1), epsilon(1). F(0) has three main subunits: a(1), b(2) and c(10-14). The alpha and beta chains form an alternating ring which encloses part of the gamma chain. F(1) is attached to F(0) by a central stalk formed by the gamma and epsilon chains, while a peripheral stalk is formed by the delta and b chains.

The protein localises to the cell inner membrane. Its function is as follows. F(1)F(0) ATP synthase produces ATP from ADP in the presence of a proton or sodium gradient. F-type ATPases consist of two structural domains, F(1) containing the extramembraneous catalytic core and F(0) containing the membrane proton channel, linked together by a central stalk and a peripheral stalk. During catalysis, ATP synthesis in the catalytic domain of F(1) is coupled via a rotary mechanism of the central stalk subunits to proton translocation. Functionally, this protein is part of the stalk that links CF(0) to CF(1). It either transmits conformational changes from CF(0) to CF(1) or is implicated in proton conduction. This is ATP synthase subunit delta from Enterobacter sp. (strain 638).